The sequence spans 241 residues: tRNA (guanine-N(1)-)-methyltransferase (241 aa).

S-adenosyl-L-methionine contacts are provided by residues Gly-108 and 127 to 132 (LGDYVL).

The protein belongs to the RNA methyltransferase TrmD family. Homodimer.

The protein localises to the cytoplasm. The catalysed reaction is guanosine(37) in tRNA + S-adenosyl-L-methionine = N(1)-methylguanosine(37) in tRNA + S-adenosyl-L-homocysteine + H(+). Functionally, specifically methylates guanosine-37 in various tRNAs. The protein is tRNA (guanine-N(1)-)-methyltransferase of Streptococcus suis (strain 98HAH33).